A 511-amino-acid chain; its full sequence is Signal transduction histidine-protein kinase/phosphatase MprB (511 aa).

Topologically, residues 1–26 (MVGFRRGPRAPLRATSSLSLRWRVML) are cytoplasmic. The chain crosses the membrane as a helical span at residues 27 to 47 (LAMSMVAMVVVLMSFAVYAVI). Over 48 to 163 (SAALYSDIDN…PTEAVMTKLR (116 aa)) the chain is Extracellular. A helical transmembrane segment spans residues 164–184 (AVLLIVGGVGVAVAAVAGGMV). Residues 185–511 (TRAGLRPVGR…SVDSQSARAR (327 aa)) are Cytoplasmic-facing. One can recognise an HAMP domain in the interval 186–238 (RAGLRPVGRLTEAAERVARTDDLRPIPVFGSDELARLTEAFNLMLRALAESRE). The 221-residue stretch at 246-466 (DAGHELRTPL…AICMLLPGRP (221 aa)) folds into the Histidine kinase domain. His-249 is modified (phosphohistidine; by autocatalysis). Positions 468 to 511 (PDSAYPAAPDDKKTEPVDTRGANGANSRGSANVISVDSQSARAR) are disordered. Basic and acidic residues predominate over residues 476–485 (PDDKKTEPVD). Over residues 491–511 (GANSRGSANVISVDSQSARAR) the composition is skewed to polar residues.

Mg(2+) serves as cofactor. Requires Mn(2+) as cofactor. Autophosphorylated.

The protein localises to the cell membrane. The enzyme catalyses ATP + protein L-histidine = ADP + protein N-phospho-L-histidine.. In terms of biological role, member of the two-component regulatory system MprB/MprA which contributes to maintaining a balance among several systems involved in stress resistance and is required for establishment and maintenance of persistent infection in the host. In response to environmental signals MprB acts both as a membrane-associated protein kinase that undergoes autophosphorylation and subsequently transfers the phosphate to MprA, and a protein phosphatase that dephosphorylates phospho-MprA. In Mycobacterium ulcerans (strain Agy99), this protein is Signal transduction histidine-protein kinase/phosphatase MprB (mprB).